The sequence spans 536 residues: GMP synthase [glutamine-hydrolyzing] (536 aa).

A Glutamine amidotransferase type-1 domain is found at 4 to 206 (KILILDFGSQ…VLDICGARAD (203 aa)). C85 acts as the Nucleophile in catalysis. Active-site residues include H180 and E182. A GMPS ATP-PPase domain is found at 207-404 (WIMGDYISEA…LGLPYHMVYR (198 aa)). 234-240 (SGGVDSS) contacts ATP.

Homodimer.

The enzyme catalyses XMP + L-glutamine + ATP + H2O = GMP + L-glutamate + AMP + diphosphate + 2 H(+). The protein operates within purine metabolism; GMP biosynthesis; GMP from XMP (L-Gln route): step 1/1. Its function is as follows. Catalyzes the synthesis of GMP from XMP. The polypeptide is GMP synthase [glutamine-hydrolyzing] (Albidiferax ferrireducens (strain ATCC BAA-621 / DSM 15236 / T118) (Rhodoferax ferrireducens)).